The sequence spans 215 residues: Probable ribosome-binding factor A, chloroplastic (215 aa).

The N-terminal 52 residues, 1–52 (MPNLLHTNQSHFFFLHHPPIYTVSSKTQAFHFPQSMAPVNLRTNLSVRRTVR), are a transit peptide targeting the chloroplast. The span at 183–192 (KGSGEGKTEP) shows a compositional bias: basic and acidic residues. Positions 183-210 (KGSGEGKTEPSDSTEDDQDWEVDDPDED) are disordered. Acidic residues predominate over residues 194 to 210 (DSTEDDQDWEVDDPDED).

The protein belongs to the RbfA family.

The protein localises to the plastid. The protein resides in the chloroplast. In Arabidopsis thaliana (Mouse-ear cress), this protein is Probable ribosome-binding factor A, chloroplastic.